The following is a 200-amino-acid chain: Prophage tail fiber assembly protein homolog TfaE (200 aa).

Belongs to the tfa family.

The protein is Prophage tail fiber assembly protein homolog TfaE (tfaE) of Escherichia coli (strain K12).